A 436-amino-acid chain; its full sequence is MASREGKRRNHNHDDEKLVPLAALISRETKAAKMEKPIVRFGQAAQSRKGEDYVLIKTDSLRVPSNSSTAFSVFAVFDGHNGKAAAVYTRENLLNHVISALPSGLSRDEWLHALPRALVSGFVKTDKEFQSRGETSGTTATFVIVDGWTVTVACVGDSRCILDTKGGSVSNLTVDHRLEDNTEERERVTASGGEVGRLSIVGGVEIGPLRCWPGGLCLSRSIGDMDVGEFIVPVPFVKQVKLSNLGGRLIIASDGIWDALSSEVAAKTCRGLSAELAARQVVKEALRRRGLKDDTTCIVVDIIPPENFQEPPPSPPKKHNNFFKSLLFRKKSNSSNKLSKKLSTVGIVEELFEEGSAMLAERLGSGDCSKESTTGGGIFTCAICQLDLAPSEGISVHAGSIFSTSLKPWQGPFLCTDCRDKKDAMEGKRPSGVKVI.

The region spanning 30–302 is the PPM-type phosphatase domain; that stretch reads KAAKMEKPIV…DDTTCIVVDI (273 aa). Mn(2+)-binding residues include Asp-78, Gly-79, Asp-254, and Asp-293.

The protein belongs to the PP2C family. It depends on Mg(2+) as a cofactor. Mn(2+) serves as cofactor.

It catalyses the reaction O-phospho-L-seryl-[protein] + H2O = L-seryl-[protein] + phosphate. The enzyme catalyses O-phospho-L-threonyl-[protein] + H2O = L-threonyl-[protein] + phosphate. The sequence is that of Probable protein phosphatase 2C 15 from Arabidopsis thaliana (Mouse-ear cress).